The following is a 153-amino-acid chain: Superoxide dismutase [Cu-Zn] (153 aa).

Cu cation contacts are provided by His45, His47, and His62. An intrachain disulfide couples Cys56 to Cys145. Zn(2+) is bound by residues His62, His70, His79, and Asp82. His119 serves as a coordination point for Cu cation.

Belongs to the Cu-Zn superoxide dismutase family. In terms of assembly, homodimer. Cu cation is required as a cofactor. Zn(2+) serves as cofactor.

The protein localises to the cytoplasm. It catalyses the reaction 2 superoxide + 2 H(+) = H2O2 + O2. Functionally, destroys radicals which are normally produced within the cells and which are toxic to biological systems. This Drosophila erecta (Fruit fly) protein is Superoxide dismutase [Cu-Zn].